The chain runs to 330 residues: MSRRYDTIKHLGEGQFANVYLAQDLESGECVAIKKIKLGSREEAKDGINRTAIREIKLLKEIHHDNIIGLRDVIGHRTSIQLVFDFMDTDLEHVIKDKEIILMPAHIKNITMQMLLGLEFLHVHWILHRDLKPNNLLMNKMGRVKLTDFGLARFFGSPNRNYTHQVVTRWYRAPELLFGARSYGVGIDIWSVGCIIAELLLRNPIFPGESDIDQLVKIFNILGCPTPETWPNMTEMNSYVIIKPQTEYMALNYYFSAAPQDLLDLMAGMWTFDPIKRLTCTQSLQMEYFRTQPFCCLDEELPLPKKQQPQKRSRRLDDDGTRPVRRLNFD.

Residues 5–289 (YDTIKHLGEG…CTQSLQMEYF (285 aa)) form the Protein kinase domain. ATP contacts are provided by residues 11 to 19 (LGEGQFANV) and Lys-34. Residue Asp-130 is the Proton acceptor of the active site. Thr-163 carries the post-translational modification Phosphothreonine. Residues 305–330 (KKQQPQKRSRRLDDDGTRPVRRLNFD) form a disordered region. The span at 315–330 (RLDDDGTRPVRRLNFD) shows a compositional bias: basic and acidic residues.

Belongs to the protein kinase superfamily. CMGC Ser/Thr protein kinase family. CDC2/CDKX subfamily. As to quaternary structure, catalytic component which, in association with cyclin H (cyh-1) and mat1, is likely to form the CAK complex.

The catalysed reaction is L-seryl-[protein] + ATP = O-phospho-L-seryl-[protein] + ADP + H(+). It carries out the reaction L-threonyl-[protein] + ATP = O-phospho-L-threonyl-[protein] + ADP + H(+). It catalyses the reaction [DNA-directed RNA polymerase] + ATP = phospho-[DNA-directed RNA polymerase] + ADP + H(+). In terms of biological role, serine/threonine kinase involved in cell cycle control and in RNA polymerase II-mediated RNA transcription. Required for maintaining chromosome ploidy. May phosphorylate the large subunit of RNA polymerase II, ama-1. The chain is Cyclin-dependent kinase 7 from Caenorhabditis elegans.